The chain runs to 135 residues: ATP synthase epsilon chain (135 aa).

This sequence belongs to the ATPase epsilon chain family. As to quaternary structure, F-type ATPases have 2 components, CF(1) - the catalytic core - and CF(0) - the membrane proton channel. CF(1) has five subunits: alpha(3), beta(3), gamma(1), delta(1), epsilon(1). CF(0) has three main subunits: a, b and c.

It localises to the cell inner membrane. Functionally, produces ATP from ADP in the presence of a proton gradient across the membrane. The chain is ATP synthase epsilon chain from Rhizobium rhizogenes (strain K84 / ATCC BAA-868) (Agrobacterium radiobacter).